The primary structure comprises 377 residues: Progesterone receptor (377 aa).

The tract at residues 1-15 (EASQSPQYSFESLPQ) is modulating, Pro-Rich. A DNA-binding region (nuclear receptor) is located at residues 16–90 (KICLICGDEA…AGMVLGGRKF (75 aa)). 2 consecutive NR C4-type zinc fingers follow at residues 18-38 (CLIC…CGSC) and 54-78 (CAGR…LRKC). Ser127 carries the phosphoserine modification. Residues 130–364 (QDLQLIPPLI…EFPEMMSEVI (235 aa)) enclose the NR LBD domain. The segment at 138–377 (LINLLMSIEP…LPKILAGMVK (240 aa)) is AF2; mediates transcriptional activation.

The protein belongs to the nuclear hormone receptor family. NR3 subfamily. In terms of assembly, interacts with CUEDC2, SMARD1 and with UNC45A. Interacts with PRMT2. Interacts with NCOA2 and NCOA1. Interacts with KLF9. Interacts with GTF2B. Palmitoylated by ZDHHC7 and ZDHHC21. Palmitoylation is required for plasma membrane targeting and for rapid intracellular signaling via ERK and AKT kinases and cAMP generation.

The protein localises to the nucleus. The steroid hormones and their receptors are involved in the regulation of eukaryotic gene expression and affect cellular proliferation and differentiation in target tissues. Transcriptional activator of several progesteron-dependent promoters in a variety of cell types. Involved in activation of SRC-dependent MAPK signaling on hormone stimulation. The sequence is that of Progesterone receptor (PGR) from Ovis aries (Sheep).